The following is a 142-amino-acid chain: Transcriptional regulator MraZ (142 aa).

2 consecutive SpoVT-AbrB domains span residues 5–48 and 77–120; these read EFEY…PLCE and AFDV…DKET.

Belongs to the MraZ family. As to quaternary structure, forms oligomers.

Its subcellular location is the cytoplasm. It is found in the nucleoid. The protein is Transcriptional regulator MraZ of Dehalococcoides mccartyi (strain ATCC BAA-2100 / JCM 16839 / KCTC 5957 / BAV1).